A 44-amino-acid polypeptide reads, in one-letter code: MHDIWVITTSPACFEILYKYCKQKGRARMGGLIVKIIRFNHASV.

This is an uncharacterized protein from Saccharomyces cerevisiae (strain ATCC 204508 / S288c) (Baker's yeast).